Reading from the N-terminus, the 346-residue chain is 4-hydroxy-3-methylbut-2-enyl diphosphate reductase (346 aa).

Cys19 is a [4Fe-4S] cluster binding site. (2E)-4-hydroxy-3-methylbut-2-enyl diphosphate contacts are provided by His48 and His84. Dimethylallyl diphosphate-binding residues include His48 and His84. The isopentenyl diphosphate site is built by His48 and His84. A [4Fe-4S] cluster-binding site is contributed by Cys106. Residue His134 coordinates (2E)-4-hydroxy-3-methylbut-2-enyl diphosphate. Residue His134 participates in dimethylallyl diphosphate binding. His134 serves as a coordination point for isopentenyl diphosphate. The Proton donor role is filled by Glu136. Thr175 provides a ligand contact to (2E)-4-hydroxy-3-methylbut-2-enyl diphosphate. Cys205 contributes to the [4Fe-4S] cluster binding site. Ser233, Ser234, Asn235, and Ser278 together coordinate (2E)-4-hydroxy-3-methylbut-2-enyl diphosphate. The dimethylallyl diphosphate site is built by Ser233, Ser234, Asn235, and Ser278. The isopentenyl diphosphate site is built by Ser233, Ser234, Asn235, and Ser278.

It belongs to the IspH family. The cofactor is [4Fe-4S] cluster.

The catalysed reaction is isopentenyl diphosphate + 2 oxidized [2Fe-2S]-[ferredoxin] + H2O = (2E)-4-hydroxy-3-methylbut-2-enyl diphosphate + 2 reduced [2Fe-2S]-[ferredoxin] + 2 H(+). The enzyme catalyses dimethylallyl diphosphate + 2 oxidized [2Fe-2S]-[ferredoxin] + H2O = (2E)-4-hydroxy-3-methylbut-2-enyl diphosphate + 2 reduced [2Fe-2S]-[ferredoxin] + 2 H(+). The protein operates within isoprenoid biosynthesis; dimethylallyl diphosphate biosynthesis; dimethylallyl diphosphate from (2E)-4-hydroxy-3-methylbutenyl diphosphate: step 1/1. It functions in the pathway isoprenoid biosynthesis; isopentenyl diphosphate biosynthesis via DXP pathway; isopentenyl diphosphate from 1-deoxy-D-xylulose 5-phosphate: step 6/6. Its function is as follows. Catalyzes the conversion of 1-hydroxy-2-methyl-2-(E)-butenyl 4-diphosphate (HMBPP) into a mixture of isopentenyl diphosphate (IPP) and dimethylallyl diphosphate (DMAPP). Acts in the terminal step of the DOXP/MEP pathway for isoprenoid precursor biosynthesis. This is 4-hydroxy-3-methylbut-2-enyl diphosphate reductase from Brucella suis biovar 1 (strain 1330).